The following is a 117-amino-acid chain: Immunoglobulin heavy variable 1-58 (117 aa).

Positions 1–19 (MDWIWRILFLVGAATGAHS) are cleaved as a signal peptide. Positions 20–44 (QMQLVQSGPEVKKPGTSVKVSCKAS) are framework-1. In terms of domain architecture, Ig-like spans 20–117 (QMQLVQSGPE…EDTAVYYCAA (98 aa)). C41 and C115 form a disulfide bridge. Positions 45–52 (GFTFTSSA) are complementarity-determining-1. Residues 53–69 (VQWVRQARGQRLEWIGW) are framework-2. The interval 70-77 (IVVGSGNT) is complementarity-determining-2. A framework-3 region spans residues 78–115 (NYAQKFQERVTITRDMSTSTAYMELSSLRSEDTAVYYC). The complementarity-determining-3 stretch occupies residues 116 to 117 (AA).

As to quaternary structure, immunoglobulins are composed of two identical heavy chains and two identical light chains; disulfide-linked.

It is found in the secreted. The protein localises to the cell membrane. In terms of biological role, v region of the variable domain of immunoglobulin heavy chains that participates in the antigen recognition. Immunoglobulins, also known as antibodies, are membrane-bound or secreted glycoproteins produced by B lymphocytes. In the recognition phase of humoral immunity, the membrane-bound immunoglobulins serve as receptors which, upon binding of a specific antigen, trigger the clonal expansion and differentiation of B lymphocytes into immunoglobulins-secreting plasma cells. Secreted immunoglobulins mediate the effector phase of humoral immunity, which results in the elimination of bound antigens. The antigen binding site is formed by the variable domain of one heavy chain, together with that of its associated light chain. Thus, each immunoglobulin has two antigen binding sites with remarkable affinity for a particular antigen. The variable domains are assembled by a process called V-(D)-J rearrangement and can then be subjected to somatic hypermutations which, after exposure to antigen and selection, allow affinity maturation for a particular antigen. The protein is Immunoglobulin heavy variable 1-58 of Homo sapiens (Human).